The chain runs to 693 residues: Kinesin-like protein KIFC1 (693 aa).

Disordered regions lie at residues 1-24 and 48-156; these read MRGR…VRTT and VKSS…KRPA. Low complexity-rich tracts occupy residues 49–59 and 127–138; these read KSSSRLPLPGS and QKPAPAAPAQKP. Ser-52 and Ser-59 each carry phosphoserine. The stretch at 165 to 334 forms a coiled coil; that stretch reads DLHEELKQYR…QELKGNIRVF (170 aa). The 354-residue stretch at 330-683 folds into the Kinesin motor domain; it reads NIRVFCRVRP…LRFASKVNQC (354 aa). Position 379 is a phosphothreonine (Thr-379). 430-437 lines the ATP pocket; the sequence is GQTGSGKT.

It belongs to the TRAFAC class myosin-kinesin ATPase superfamily. Kinesin family. NCD subfamily. In terms of assembly, binds NUBP1 and NUBP2. Interacts with PPP1R42.

The protein localises to the nucleus. It localises to the cytoplasm. It is found in the cytoskeleton. Its subcellular location is the microtubule organizing center. The protein resides in the centrosome. The protein localises to the spindle. It localises to the early endosome. Its function is as follows. Minus end-directed microtubule-dependent motor required for bipolar spindle formation. May contribute to movement of early endocytic vesicles. Regulates cilium formation and structure. This is Kinesin-like protein KIFC1 from Rattus norvegicus (Rat).